A 123-amino-acid chain; its full sequence is Putative iron-sulfur cluster insertion protein ErpA (123 aa).

Iron-sulfur cluster contacts are provided by C51, C115, and C117.

It belongs to the HesB/IscA family. Homodimer. Iron-sulfur cluster serves as cofactor.

Its function is as follows. Required for insertion of 4Fe-4S clusters. This is Putative iron-sulfur cluster insertion protein ErpA from Bordetella bronchiseptica (strain ATCC BAA-588 / NCTC 13252 / RB50) (Alcaligenes bronchisepticus).